Consider the following 439-residue polypeptide: Histidine--tRNA ligase (439 aa).

This sequence belongs to the class-II aminoacyl-tRNA synthetase family. As to quaternary structure, homodimer.

Its subcellular location is the cytoplasm. The catalysed reaction is tRNA(His) + L-histidine + ATP = L-histidyl-tRNA(His) + AMP + diphosphate + H(+). The protein is Histidine--tRNA ligase of Leptospira interrogans serogroup Icterohaemorrhagiae serovar copenhageni (strain Fiocruz L1-130).